A 43-amino-acid polypeptide reads, in one-letter code: MFKSRIETGGFQFQVHGDDESAMDDEFIDDDDDQQVVEPVTDN.

Residues 1–43 (MFKSRIETGGFQFQVHGDDESAMDDEFIDDDDDQQVVEPVTDN) are disordered. Residues 20-35 (ESAMDDEFIDDDDDQQ) show a composition bias toward acidic residues.

This is an uncharacterized protein from Dictyostelium discoideum (Social amoeba).